A 281-amino-acid chain; its full sequence is UPF0500 protein C1orf216 homolog (281 aa).

Over residues 1–12 (MFTIQKPDTVSH) the composition is skewed to polar residues. The segment at 1–197 (MFTIQKPDTV…SSSDSDSISV (197 aa)) is disordered. Basic and acidic residues predominate over residues 45-74 (TYDKNENWSQDKKGGEEGENKSKSEDEHSS). Low complexity-rich tracts occupy residues 92-102 (STGSEGISLSS), 147-161 (SSSL…VSAS), and 169-178 (PAPTTTPQEN). Residues 179 to 190 (PETEDSDVESSS) show a composition bias toward acidic residues. A coiled-coil region spans residues 198–257 (TLSEAFQSLQDKEKLKEREKEKHHAQLTMYRRLALLRWIRALQQKVRDQQNRLQESFDTI).

Belongs to the UPF0500 family.

The polypeptide is UPF0500 protein C1orf216 homolog (Xenopus laevis (African clawed frog)).